A 199-amino-acid chain; its full sequence is N-(5'-phosphoribosyl)anthranilate isomerase (199 aa).

Belongs to the TrpF family.

It catalyses the reaction N-(5-phospho-beta-D-ribosyl)anthranilate = 1-(2-carboxyphenylamino)-1-deoxy-D-ribulose 5-phosphate. It participates in amino-acid biosynthesis; L-tryptophan biosynthesis; L-tryptophan from chorismate: step 3/5. The chain is N-(5'-phosphoribosyl)anthranilate isomerase from Campylobacter jejuni subsp. jejuni serotype O:2 (strain ATCC 700819 / NCTC 11168).